The chain runs to 82 residues: Small ribosomal subunit protein uS17 (82 aa).

The protein belongs to the universal ribosomal protein uS17 family. Part of the 30S ribosomal subunit.

Its function is as follows. One of the primary rRNA binding proteins, it binds specifically to the 5'-end of 16S ribosomal RNA. The protein is Small ribosomal subunit protein uS17 of Rhodopseudomonas palustris (strain HaA2).